A 390-amino-acid chain; its full sequence is UPF0229 protein Cbei_0567 (390 aa).

The segment at 77–108 (SGVGNEKRGEKLGNGNKKLAKGNQGAGNEEGD) is disordered. Low complexity predominate over residues 89-103 (GNGNKKLAKGNQGAG).

This sequence belongs to the UPF0229 family.

The chain is UPF0229 protein Cbei_0567 from Clostridium beijerinckii (strain ATCC 51743 / NCIMB 8052) (Clostridium acetobutylicum).